Reading from the N-terminus, the 152-residue chain is Nucleoside diphosphate kinase B (152 aa).

An interaction with AKAP13 region spans residues 1–66; the sequence is MANLERTFIA…DRPFFPGLVK (66 aa). Positions 12, 60, 88, 94, 105, and 115 each coordinate ATP. His118 serves as the catalytic Pros-phosphohistidine intermediate.

This sequence belongs to the NDK family. Hexamer of two different chains: An and B (A6, A5B, A4B2, A3B3, A2B4, AB5, B6). Interacts with CAPN8. Interacts with AKAP13. Interacts with ITGB1BP1 (via C-terminal domain region). Interacts with BCL2L10. Mg(2+) is required as a cofactor. As to expression, expressed in the base region of the oxyntic and pyloric mucosae.

The protein localises to the cytoplasm. Its subcellular location is the cell projection. It is found in the lamellipodium. It localises to the ruffle. The protein resides in the nucleus. It catalyses the reaction a 2'-deoxyribonucleoside 5'-diphosphate + ATP = a 2'-deoxyribonucleoside 5'-triphosphate + ADP. The enzyme catalyses a ribonucleoside 5'-diphosphate + ATP = a ribonucleoside 5'-triphosphate + ADP. The catalysed reaction is ATP + protein L-histidine = ADP + protein N-phospho-L-histidine.. Major role in the synthesis of nucleoside triphosphates other than ATP. The ATP gamma phosphate is transferred to the NDP beta phosphate via a ping-pong mechanism, using a phosphorylated active-site intermediate. Negatively regulates Rho activity by interacting with AKAP13/LBC. Acts as a transcriptional activator of the MYC gene; binds DNA non-specifically. Binds to both single-stranded guanine- and cytosine-rich strands within the nuclease hypersensitive element (NHE) III(1) region of the MYC gene promoter. Does not bind to duplex NHE III(1). Has G-quadruplex (G4) DNA-binding activity, which is independent of its nucleotide-binding and kinase activity. Binds both folded and unfolded G4 with similar low nanomolar affinities. Stabilizes folded G4s regardless of whether they are prefolded or not. Exhibits histidine protein kinase activity. The polypeptide is Nucleoside diphosphate kinase B (Nme2) (Mus musculus (Mouse)).